The sequence spans 205 residues: Small ribosomal subunit protein bS16 (205 aa).

Positions 110–205 (GEEVKIAVGT…ADDNEEPEDE (96 aa)) are disordered. Residues 123-132 (DPLERERERA) show a composition bias toward basic and acidic residues. Over residues 153-205 (EETEAEEAEDVETADAEDADAASETDEPEAAADEADETDASADADDNEEPEDE) the composition is skewed to acidic residues.

It belongs to the bacterial ribosomal protein bS16 family.

This Salinibacter ruber (strain DSM 13855 / M31) protein is Small ribosomal subunit protein bS16.